A 425-amino-acid chain; its full sequence is Serine--tRNA ligase (425 aa).

233–235 (TAE) is a binding site for L-serine. 264-266 (RRE) contributes to the ATP binding site. Glu287 is a binding site for L-serine. 351–354 (EISS) provides a ligand contact to ATP. Ser387 provides a ligand contact to L-serine.

The protein belongs to the class-II aminoacyl-tRNA synthetase family. Type-1 seryl-tRNA synthetase subfamily. As to quaternary structure, homodimer. The tRNA molecule binds across the dimer.

Its subcellular location is the cytoplasm. The catalysed reaction is tRNA(Ser) + L-serine + ATP = L-seryl-tRNA(Ser) + AMP + diphosphate + H(+). It catalyses the reaction tRNA(Sec) + L-serine + ATP = L-seryl-tRNA(Sec) + AMP + diphosphate + H(+). The protein operates within aminoacyl-tRNA biosynthesis; selenocysteinyl-tRNA(Sec) biosynthesis; L-seryl-tRNA(Sec) from L-serine and tRNA(Sec): step 1/1. In terms of biological role, catalyzes the attachment of serine to tRNA(Ser). Is also able to aminoacylate tRNA(Sec) with serine, to form the misacylated tRNA L-seryl-tRNA(Sec), which will be further converted into selenocysteinyl-tRNA(Sec). The protein is Serine--tRNA ligase of Thermotoga maritima (strain ATCC 43589 / DSM 3109 / JCM 10099 / NBRC 100826 / MSB8).